Here is a 339-residue protein sequence, read N- to C-terminus: Glycerol-3-phosphate dehydrogenase [NAD(P)+] (339 aa).

S11, W12, and K109 together coordinate NADPH. 3 residues coordinate sn-glycerol 3-phosphate: K109, G140, and S142. A144 provides a ligand contact to NADPH. Residues K195, D249, S259, R260, and N261 each coordinate sn-glycerol 3-phosphate. Catalysis depends on K195, which acts as the Proton acceptor. R260 contacts NADPH. Residues V284 and E286 each coordinate NADPH.

The protein belongs to the NAD-dependent glycerol-3-phosphate dehydrogenase family.

Its subcellular location is the cytoplasm. It carries out the reaction sn-glycerol 3-phosphate + NAD(+) = dihydroxyacetone phosphate + NADH + H(+). The enzyme catalyses sn-glycerol 3-phosphate + NADP(+) = dihydroxyacetone phosphate + NADPH + H(+). Its pathway is membrane lipid metabolism; glycerophospholipid metabolism. Its function is as follows. Catalyzes the reduction of the glycolytic intermediate dihydroxyacetone phosphate (DHAP) to sn-glycerol 3-phosphate (G3P), the key precursor for phospholipid synthesis. The sequence is that of Glycerol-3-phosphate dehydrogenase [NAD(P)+] from Lactobacillus johnsonii (strain CNCM I-12250 / La1 / NCC 533).